The chain runs to 65 residues: Large ribosomal subunit protein bL31 (65 aa).

Zn(2+)-binding residues include Cys16, Cys18, Cys36, and Cys39.

It belongs to the bacterial ribosomal protein bL31 family. Type A subfamily. As to quaternary structure, part of the 50S ribosomal subunit. Requires Zn(2+) as cofactor.

In terms of biological role, binds the 23S rRNA. This Geobacter sulfurreducens (strain ATCC 51573 / DSM 12127 / PCA) protein is Large ribosomal subunit protein bL31.